Reading from the N-terminus, the 464-residue chain is Antithrombin-III (464 aa).

The first 32 residues, 1-32, serve as a signal peptide directing secretion; that stretch reads MYSNVIGTVTSGKRKVYLLSLLLIGFWDCVTC. Cystine bridges form between Cys-40-Cys-160 and Cys-53-Cys-127. At Thr-63 the chain carries Phosphothreonine; by FAM20C. Ser-68 carries the phosphoserine; by FAM20C modification. Position 81 (Trp-81) interacts with heparin. Asn-128 is a glycosylation site (N-linked (GlcNAc...) asparagine). Position 161 (Arg-161) interacts with heparin. A glycan (N-linked (GlcNAc...) asparagine) is linked at Asn-167. Heparin is bound at residue Arg-177. Asn-187 carries an N-linked (GlcNAc...) (complex) asparagine glycan. Asn-224 is a glycosylation site (N-linked (GlcNAc...) asparagine). A disulfide bridge links Cys-279 with Cys-462.

This sequence belongs to the serpin family. As to quaternary structure, forms protease inhibiting heterodimer with TMPRSS7. Post-translationally, phosphorylated by FAM20C in the extracellular medium. Found in plasma.

It is found in the secreted. Its subcellular location is the extracellular space. Most important serine protease inhibitor in plasma that regulates the blood coagulation cascade. AT-III inhibits thrombin, matriptase-3/TMPRSS7, as well as factors IXa, Xa and XIa. Its inhibitory activity is greatly enhanced in the presence of heparin. This chain is Antithrombin-III (SERPINC1), found in Homo sapiens (Human).